Consider the following 139-residue polypeptide: MSRRTAREASMKLVFQMAFNDDHVDEVGAEDILAQAKEELNYNNYQYIETVVSRTESNLQKIDEYIEKFSENWKIDRLSKVDLSILRLAISEILFFDDIPTRVSINEAVELAKKFSTDKASGYINGILDQVANQLNKAR.

Belongs to the NusB family.

In terms of biological role, involved in transcription antitermination. Required for transcription of ribosomal RNA (rRNA) genes. Binds specifically to the boxA antiterminator sequence of the ribosomal RNA (rrn) operons. The sequence is that of Transcription antitermination protein NusB from Natranaerobius thermophilus (strain ATCC BAA-1301 / DSM 18059 / JW/NM-WN-LF).